A 395-amino-acid chain; its full sequence is Inner membrane protein YjgN (395 aa).

At 1 to 24 the chain is on the cytoplasmic side; the sequence is MNNVISSKDNHNHTLVFTGKGGKY. A helical transmembrane segment spans residues 25-45; the sequence is FVICLVNFLLTCITLGIYAPW. Residues 46–71 are Periplasmic-facing; the sequence is AMVKCRRYIYTNMTLNNQPFAYKATG. The helical transmembrane segment at 72–92 threads the bilayer; it reads GALFISVLLVFIIYIVSLSLI. The Cytoplasmic portion of the chain corresponds to 93–95; that stretch reads EHG. A helical transmembrane segment spans residues 96-116; the sequence is HPGLGFTLFGLLIAIIPFMAV. The Periplasmic portion of the chain corresponds to 117-146; it reads KGLQYQAMMTSLNGVHFGFQCSMRRAWWYM. The helical transmembrane segment at 147–167 threads the bilayer; that stretch reads FALPVLLMVALYIVLYIISLV. A topological domain (cytoplasmic) is located at residue threonine 168. A helical membrane pass occupies residues 169 to 189; the sequence is IAVGGLVFSIVFLGLLAIIGI. The Periplasmic portion of the chain corresponds to 190 to 229; sequence GVINGITYSKWMTLFGNGANFGIHRFSIQVNVKTCIRGCV. Residues 230–250 traverse the membrane as a helical segment; it reads LAMLTLFPFAVVIGYLIAPVF. Over 251–275 the chain is Cytoplasmic; sequence TDMILLSMMGNAQAGGALILQYYGQ. Residues 276 to 296 form a helical membrane-spanning segment; that stretch reads IMACYFLYFLAIIVVTSYLYV. The Periplasmic portion of the chain corresponds to 297–327; the sequence is ALRNLFLNNLSLANDSIRFHSSVTAHGMLWR. The chain crosses the membrane as a helical span at residues 328–348; that stretch reads LLVVFVISGVTLGLAYPWLKI. Over 349-395 the chain is Cytoplasmic; that stretch reads WLVSWLAQNTQVQGDLDSLELTNDEKPLENSPLMWISRGIMPYFPFI.

It is found in the cell inner membrane. The sequence is that of Inner membrane protein YjgN (yjgN) from Salmonella typhimurium (strain LT2 / SGSC1412 / ATCC 700720).